A 528-amino-acid polypeptide reads, in one-letter code: Galactokinase (528 aa).

The alpha-D-galactose site is built by Arg-53, Glu-59, His-60, and Asp-62. Positions 165, 167, 169, and 170 each coordinate ATP. Residues Asn-213 and Asp-217 each coordinate alpha-D-galactose. Asp-217 acts as the Proton acceptor in catalysis. ATP is bound by residues Ser-264, Asn-265, and Lys-266. Tyr-274 is a binding site for alpha-D-galactose. Position 381 is a phosphoserine (Ser-381).

The protein belongs to the GHMP kinase family. GalK subfamily.

The catalysed reaction is alpha-D-galactose + ATP = alpha-D-galactose 1-phosphate + ADP + H(+). It functions in the pathway carbohydrate metabolism; galactose metabolism. Galactokinase is a key enzyme in the galactose metabolism where it catalyzes the conversion of alpha-D-galactose to galactose 1-phosphate. Can also induce the transcription of the yeast GAL genes in response to the organism being challenged with galactose as the sole source of carbon. It's striking amino acid sequence similarity to GAL3 might explain its GAL3-like induction activity. The chain is Galactokinase from Saccharomyces cerevisiae (strain ATCC 204508 / S288c) (Baker's yeast).